Here is an 824-residue protein sequence, read N- to C-terminus: Lon protease (824 aa).

Residues 1-23 (MNEPMSLFDDLPEEHDEPQEAPE) are disordered. Over residues 10–20 (DLPEEHDEPQE) the composition is skewed to acidic residues. In terms of domain architecture, Lon N-terminal spans 26–222 (LPMVVLGEMV…KVYLVLARQL (197 aa)). ATP is bound at residue 375–382 (GPPGVGKT). One can recognise a Lon proteolytic domain in the interval 617–798 (QDEVGVATGV…DEVLRIALSR (182 aa)). Active-site residues include serine 704 and lysine 747. Residues 800–824 (PTPANNQNGSHTNNRGQPSPAPAGT) form a disordered region. Positions 802–816 (PANNQNGSHTNNRGQ) are enriched in polar residues.

Belongs to the peptidase S16 family. As to quaternary structure, homohexamer. Organized in a ring with a central cavity.

The protein resides in the cytoplasm. The enzyme catalyses Hydrolysis of proteins in presence of ATP.. Its function is as follows. ATP-dependent serine protease that mediates the selective degradation of mutant and abnormal proteins as well as certain short-lived regulatory proteins. Required for cellular homeostasis and for survival from DNA damage and developmental changes induced by stress. Degrades polypeptides processively to yield small peptide fragments that are 5 to 10 amino acids long. Binds to DNA in a double-stranded, site-specific manner. This is Lon protease from Chloroflexus aggregans (strain MD-66 / DSM 9485).